Reading from the N-terminus, the 143-residue chain is Histone H2B.2, sperm (143 aa).

Residues 1 to 49 are disordered; the sequence is MPKSPSKSSPRKGSPRKGSPRKGSPKRGGKGAKRAGKGGRRNVVKRRRR. Short sequence motifs (SPKK motif) lie at residues 4 to 7, 9 to 12, 14 to 17, 19 to 22, and 24 to 27; these read SPSK, SPRK, and SPKR. Residues 9–49 are compositionally biased toward basic residues; it reads SPRKGSPRKGSPRKGSPKRGGKGAKRAGKGGRRNVVKRRRR. Residues serine 14, serine 19, and serine 24 each carry the phosphoserine modification. Residue serine 129 is glycosylated (O-linked (GlcNAc) serine). Lysine 137 participates in a covalent cross-link: Glycyl lysine isopeptide (Lys-Gly) (interchain with G-Cter in ubiquitin).

This sequence belongs to the histone H2B family. As to quaternary structure, the nucleosome is a histone octamer containing two molecules each of H2A, H2B, H3 and H4 assembled in one H3-H4 heterotetramer and two H2A-H2B heterodimers. The octamer wraps approximately 147 bp of DNA. In terms of processing, monoubiquitination of Lys-137 gives a specific tag for epigenetic transcriptional activation and is also prerequisite for histone H3 'Lys-4' and 'Lys-79' methylation. Phosphorylated on SPKK motifs 3, 4 and 5; which may regulate DNA binding. Dephosphorylated during maturation of spermatids to mature sperm and rephosphorylated at fertilization. Post-translationally, glcNAcylation at Ser-129 promotes monoubiquitination of Lys-137. It fluctuates in response to extracellular glucose, and associates with transcribed genes.

It is found in the nucleus. The protein resides in the chromosome. Its function is as follows. Core component of nucleosome. Nucleosomes wrap and compact DNA into chromatin, limiting DNA accessibility to the cellular machineries which require DNA as a template. Histones thereby play a central role in transcription regulation, DNA repair, DNA replication and chromosomal stability. DNA accessibility is regulated via a complex set of post-translational modifications of histones, also called histone code, and nucleosome remodeling. The chain is Histone H2B.2, sperm from Psammechinus miliaris (Green sea urchin).